Here is a 249-residue protein sequence, read N- to C-terminus: Phosphatidylglycerol--prolipoprotein diacylglyceryl transferase (249 aa).

The next 7 helical transmembrane spans lie at 11 to 31, 49 to 69, 82 to 102, 116 to 136, 163 to 183, 192 to 212, and 223 to 243; these read LKIYGYGAMIALGILAAVILL, AIVGIIGGILGGKLLYIIVDI, LGNGFVIYGAIIGGAISVYLY, LVVPSVALAQGFGRIGCFLAG, LHPTQIYSSIFDFLLAFFLLW, GRVFSLYVIIYGVGRVIVEFL, and LSTSQFISLFTIIIGIFVFNI. Arg-129 contacts a 1,2-diacyl-sn-glycero-3-phospho-(1'-sn-glycerol).

This sequence belongs to the Lgt family.

The protein localises to the cell membrane. The enzyme catalyses L-cysteinyl-[prolipoprotein] + a 1,2-diacyl-sn-glycero-3-phospho-(1'-sn-glycerol) = an S-1,2-diacyl-sn-glyceryl-L-cysteinyl-[prolipoprotein] + sn-glycerol 1-phosphate + H(+). It functions in the pathway protein modification; lipoprotein biosynthesis (diacylglyceryl transfer). Its function is as follows. Catalyzes the transfer of the diacylglyceryl group from phosphatidylglycerol to the sulfhydryl group of the N-terminal cysteine of a prolipoprotein, the first step in the formation of mature lipoproteins. The polypeptide is Phosphatidylglycerol--prolipoprotein diacylglyceryl transferase (Clostridium tetani (strain Massachusetts / E88)).